The sequence spans 148 residues: MTIIEVKIKKLENFLGNLPEYATEHSAGMDLVAANEQSITIKVGSIQLIPTGIAIALPESFEAQIRPRSGLAVKHGITVANSPGTIDADYRGEIKVLLINLGNKDFIIEKGMRIAQMIIAKYERVLWAETSILTETMRGRGGFGSTGL.

Substrate is bound by residues 68-70 (RSG), N81, 85-87 (TID), and K95.

The protein belongs to the dUTPase family. Requires Mg(2+) as cofactor.

The enzyme catalyses dUTP + H2O = dUMP + diphosphate + H(+). It functions in the pathway pyrimidine metabolism; dUMP biosynthesis; dUMP from dCTP (dUTP route): step 2/2. Functionally, this enzyme is involved in nucleotide metabolism: it produces dUMP, the immediate precursor of thymidine nucleotides and it decreases the intracellular concentration of dUTP so that uracil cannot be incorporated into DNA. This chain is Deoxyuridine 5'-triphosphate nucleotidohydrolase, found in Rickettsia prowazekii (strain Madrid E).